We begin with the raw amino-acid sequence, 211 residues long: Adenylate kinase (211 aa).

Residue 13-18 participates in ATP binding; the sequence is GAGKGT. The interval 33-62 is NMP; sequence STGDILRVAVANKTKLGLEAKKFMDAGQLV. AMP-binding positions include T34, R39, 60 to 62, 88 to 91, and Q95; these read QLV and GFPR. Positions 129 to 161 are LID; the sequence is GRRTSKVTGKIYHIKFNPPVDEKPEDLVQRADD. Residues R130 and 139–140 contribute to the ATP site; that span reads IY. AMP contacts are provided by R158 and R169. Position 197 (K197) interacts with ATP.

This sequence belongs to the adenylate kinase family. In terms of assembly, monomer.

The protein localises to the cytoplasm. It catalyses the reaction AMP + ATP = 2 ADP. It functions in the pathway purine metabolism; AMP biosynthesis via salvage pathway; AMP from ADP: step 1/1. Functionally, catalyzes the reversible transfer of the terminal phosphate group between ATP and AMP. Plays an important role in cellular energy homeostasis and in adenine nucleotide metabolism. This chain is Adenylate kinase, found in Fusobacterium nucleatum subsp. nucleatum (strain ATCC 25586 / DSM 15643 / BCRC 10681 / CIP 101130 / JCM 8532 / KCTC 2640 / LMG 13131 / VPI 4355).